A 74-amino-acid polypeptide reads, in one-letter code: U12-theraphotoxin-Hs1a (74 aa).

Positions 1-20 (MNVKILLLLVGLNLVMHSNA) are cleaved as a signal peptide. Residues 21–40 (TGDSETNPAETLFIEEIFRR) constitute a propeptide that is removed on maturation. 3 disulfide bridges follow: C42–C56, C49–C61, and C55–C71.

This sequence belongs to the neurotoxin 35 family. In terms of tissue distribution, expressed by the venom gland.

The protein localises to the secreted. Functionally, putative ion channel inhibitor. The chain is U12-theraphotoxin-Hs1a from Cyriopagopus schmidti (Chinese bird spider).